Reading from the N-terminus, the 328-residue chain is P2Y purinoceptor 3 (328 aa).

Residues 1–22 (MSMANFTGGRNSCTFHEEFKQV) lie on the Extracellular side of the membrane. A glycan (N-linked (GlcNAc...) asparagine) is linked at Asn-5. Residues 23–43 (LLPLVYSVVFLLGLPLNAVVI) traverse the membrane as a helical segment. The Cytoplasmic portion of the chain corresponds to 44-57 (GQIWLARKALTRTT). Residues 58 to 78 (IYMLNLAMADLLYVCSLPLLI) traverse the membrane as a helical segment. The Extracellular segment spans residues 79–96 (YNYTQKDYWPFGDFTCKF). Residues Cys-94 and Cys-172 are joined by a disulfide bond. The chain crosses the membrane as a helical span at residues 97 to 117 (VRFQFYTNLHGSILFLTCISV). Topologically, residues 118 to 139 (QRYMGICHPLASWHKKKGKKLT) are cytoplasmic. The chain crosses the membrane as a helical span at residues 140 to 160 (WLVCAAVWFIVIAQCLPTFVF). Over 161–189 (ASTGTQRNRTVCYDLSPPDRSTSYFPYGI) the chain is Extracellular. The chain crosses the membrane as a helical span at residues 190–210 (TLTITGFLLPFAAILACYCSM). Topologically, residues 211–231 (ARILCQKDELIGLAVHKKKDK) are cytoplasmic. Residues 232–252 (AVRMIIIVVIVFSISFFPFHL) form a helical membrane-spanning segment. The Extracellular segment spans residues 253-275 (TKTIYLIVRSSASLPCPTLQAFA). Residues 276 to 298 (IAYKCTRPFASMNSVLDPILFYF) traverse the membrane as a helical segment. The Cytoplasmic segment spans residues 299 to 323 (TQRKFRESTRYLLDKMSSKWRQDHC).

It belongs to the G-protein coupled receptor 1 family.

It is found in the cell membrane. Receptor for extracellular ADP &gt; UTP &gt; ATP = UDP. The activity of this receptor is mediated by G proteins which activate a phosphatidylinositol-calcium second messenger system. This is P2Y purinoceptor 3 (P2RY3) from Gallus gallus (Chicken).